The chain runs to 466 residues: Secreted RxLR effector protein 101 (466 aa).

The first 21 residues, 1-21 (MRGAYSVITALLVVASSQIAA), serve as a signal peptide directing secretion. Positions 48–63 (RYLRGSQHVHDSNEER) match the RxLR-dEER motif. Disordered regions lie at residues 99–127 (KMPH…GANA) and 384–405 (RTFN…VRSS). The segment covering 109 to 121 (KVSRVTRTGKKMT) has biased composition (basic residues). Positions 385 to 395 (TFNGNTDTASL) are enriched in polar residues.

This sequence belongs to the RxLR effector family.

It localises to the secreted. The protein resides in the host nucleus. Its function is as follows. Secreted effector that partially suppresses the host cell death induced by cell death-inducing proteins. The chain is Secreted RxLR effector protein 101 from Plasmopara viticola (Downy mildew of grapevine).